Consider the following 177-residue polypeptide: uncharacterized protein (177 aa).

The interval 122–177 (LPFTRNGSGQQSNKLRDPKKGRTHKPKPSEKHKKNKTGKKGAQEKTHRSRSSRKGN) is disordered. Composition is skewed to basic residues over residues 142 to 160 (GRTHKPKPSEKHKKNKTGK) and 168 to 177 (HRSRSSRKGN).

This is an uncharacterized protein from Saccharomyces cerevisiae (strain ATCC 204508 / S288c) (Baker's yeast).